Reading from the N-terminus, the 117-residue chain is MDMRVPAQRLGLLLLWFPGARCAIRMTQSPFSLSASVGDRVTITCWASQGISSYLAWYQQKPAKAPKLFIYYASSLQSGVPSRFSGSGSGTDYTLTISSLQPEDFATYYCQQYYSTP.

The first 22 residues, 1–22 (MDMRVPAQRLGLLLLWFPGARC), serve as a signal peptide directing secretion. A framework-1 region spans residues 23-45 (AIRMTQSPFSLSASVGDRVTITC). An Ig-like domain is found at 23 to 117 (AIRMTQSPFS…YYCQQYYSTP (95 aa)). A disulfide bridge links Cys45 with Cys110. A complementarity-determining-1 region spans residues 46–56 (WASQGISSYLA). The framework-2 stretch occupies residues 57-71 (WYQQKPAKAPKLFIY). The interval 72–78 (YASSLQS) is complementarity-determining-2. Positions 79-110 (GVPSRFSGSGSGTDYTLTISSLQPEDFATYYC) are framework-3. A complementarity-determining-3 region spans residues 111–117 (QQYYSTP).

In terms of assembly, immunoglobulins are composed of two identical heavy chains and two identical light chains; disulfide-linked.

The protein localises to the secreted. The protein resides in the cell membrane. In terms of biological role, v region of the variable domain of immunoglobulin light chains that participates in the antigen recognition. Immunoglobulins, also known as antibodies, are membrane-bound or secreted glycoproteins produced by B lymphocytes. In the recognition phase of humoral immunity, the membrane-bound immunoglobulins serve as receptors which, upon binding of a specific antigen, trigger the clonal expansion and differentiation of B lymphocytes into immunoglobulins-secreting plasma cells. Secreted immunoglobulins mediate the effector phase of humoral immunity, which results in the elimination of bound antigens. The antigen binding site is formed by the variable domain of one heavy chain, together with that of its associated light chain. Thus, each immunoglobulin has two antigen binding sites with remarkable affinity for a particular antigen. The variable domains are assembled by a process called V-(D)-J rearrangement and can then be subjected to somatic hypermutations which, after exposure to antigen and selection, allow affinity maturation for a particular antigen. The polypeptide is Immunoglobulin kappa variable 1D-43 (Homo sapiens (Human)).